The primary structure comprises 354 residues: Protein-arginine kinase (354 aa).

The Phosphagen kinase C-terminal domain maps to 24 to 254 (IVLSSRIRLA…QQIIQQEKMA (231 aa)). Residues 27-31 (SSRIR), H92, R125, 176-180 (RASVM), and 207-212 (RGIYGE) contribute to the ATP site. Residues 337–342 (RDYRRA) carry the RDXXRA motif of the pArg binding pocket involved in allosteric regulation motif.

This sequence belongs to the ATP:guanido phosphotransferase family.

The enzyme catalyses L-arginyl-[protein] + ATP = N(omega)-phospho-L-arginyl-[protein] + ADP + H(+). Appears to be allosterically activated by the binding of pArg-containing polypeptides to the pArg-binding pocket localized in the C-terminal domain of McsB. Its function is as follows. Catalyzes the specific phosphorylation of arginine residues in a large number of proteins. Is part of the bacterial stress response system. Protein arginine phosphorylation has a physiologically important role and is involved in the regulation of many critical cellular processes, such as protein homeostasis, motility, competence, and stringent and stress responses, by regulating gene expression and protein activity. The chain is Protein-arginine kinase from Bacillus cereus (strain ATCC 10987 / NRS 248).